Consider the following 278-residue polypeptide: MLDQTLEPLRAVIARHGLSADKRLGQNFLLDSQLLDRIARVPGDLTQKTVYEVGPGPGGLTRALLKAGAKVTAVERDRRCLPALAELSAHFPDQLQVISGDAMEIDEAAVLGEHVHIVANLPYNVGTALLIRWLTAKTWQPWWSSLTLMFQKEVAERITAKVGTPHYGRLSVLAQWRSEAKLSFPVHRSAFVPPPKVMSAVVHLTPKDQPEGLSLGTLEKITAAAFNQRRKMLRQSLKNIEHMMEALELAGIDATRRPETVSVAEFIAIGRHWEKLSA.

Residues N27, L29, G54, E75, D101, and N120 each coordinate S-adenosyl-L-methionine.

The protein belongs to the class I-like SAM-binding methyltransferase superfamily. rRNA adenine N(6)-methyltransferase family. RsmA subfamily.

The protein localises to the cytoplasm. The enzyme catalyses adenosine(1518)/adenosine(1519) in 16S rRNA + 4 S-adenosyl-L-methionine = N(6)-dimethyladenosine(1518)/N(6)-dimethyladenosine(1519) in 16S rRNA + 4 S-adenosyl-L-homocysteine + 4 H(+). Functionally, specifically dimethylates two adjacent adenosines (A1518 and A1519) in the loop of a conserved hairpin near the 3'-end of 16S rRNA in the 30S particle. May play a critical role in biogenesis of 30S subunits. This chain is Ribosomal RNA small subunit methyltransferase A, found in Zymomonas mobilis subsp. mobilis (strain ATCC 31821 / ZM4 / CP4).